Reading from the N-terminus, the 1224-residue chain is Tyrosine-protein kinase abl-1 (1224 aa).

The region spanning 115–188 is the SH3 domain; the sequence is SSAPLFVALY…PSNFIAPYNS (74 aa). The SH2 domain occupies 194–284; it reads WYHGKISRSD…GLICLLMYPA (91 aa). The Protein kinase domain occupies 311-562; that stretch reads IIMHNKLGGG…PRFRDIHFNL (252 aa). Residues 317–325, Lys340, and 385–391 each bind ATP; these read LGGGQYGDV and EFMCNGN. Asp432 acts as the Proton acceptor in catalysis. The short motif at 450 to 474 is the Kinase activation loop element; that stretch reads DFGLARFMKEDTYTAHAGAKFPIKW. Basic and acidic residues predominate over residues 579 to 620; it reads LKKNNDKKLESDKRRSNVRERSDSKSRHSSHHDRDRDRESLH. 5 disordered regions span residues 579-671, 736-775, 796-881, 914-937, and 968-1016; these read LKKN…NTKP, KEST…STYV, KRSE…DVGM, LRHV…ATDN, and RPFS…RSNG. 2 stretches are compositionally biased toward polar residues: residues 639–655 and 746–760; these read SVSF…TSFR and AGSS…NDSL. Composition is skewed to basic and acidic residues over residues 797 to 819 and 864 to 877; these read RSET…KSEK and PDSK…ETTK. Positions 973-984 are enriched in polar residues; the sequence is QCPNNSTSSAIS. The span at 1001-1016 shows a compositional bias: basic and acidic residues; the sequence is YEERMKPELPRKRSNG.

The protein belongs to the protein kinase superfamily. Tyr protein kinase family. ABL subfamily. Interacts (via SH2 and SH3 domains) with mig-13; the interaction is direct. May interact with soem-1.

The protein resides in the cell membrane. Its subcellular location is the cytoplasm. It catalyses the reaction L-tyrosyl-[protein] + ATP = O-phospho-L-tyrosyl-[protein] + ADP + H(+). In terms of biological role, functions downstream of migratory protein mig-13 and is involved in Q neuroblast migration during larval development. Recruited by mig-13 to the leading edge of Q neuroblasts and their descendents to signal downstream, likely to the wve-1 pathway, and direct migration along the anteroposterior body axis. Promotes germline cell apoptosis in response to oxidative, osmotic and heat shock stresses. This is Tyrosine-protein kinase abl-1 (abl-1) from Caenorhabditis elegans.